The following is a 228-amino-acid chain: UPF0173 metal-dependent hydrolase ABC2731 (228 aa).

This sequence belongs to the UPF0173 family.

The protein is UPF0173 metal-dependent hydrolase ABC2731 of Shouchella clausii (strain KSM-K16) (Alkalihalobacillus clausii).